We begin with the raw amino-acid sequence, 71 residues long: Small ribosomal subunit protein bS18c (71 aa).

It belongs to the bacterial ribosomal protein bS18 family. In terms of assembly, part of the 30S ribosomal subunit.

Its subcellular location is the plastid. It is found in the chloroplast. This chain is Small ribosomal subunit protein bS18c (rps18), found in Mesostigma viride (Green alga).